The sequence spans 42 residues: GHVPCGKDGRKCGYHTHCCNCCLSGICKPSTSLIGCSTSSFT.

4 disulfides stabilise this stretch: cysteine 5–cysteine 19, cysteine 12–cysteine 22, cysteine 18–cysteine 27, and cysteine 21–cysteine 36.

The protein belongs to the conotoxin I1 superfamily. In terms of tissue distribution, expressed by the venom duct.

Its subcellular location is the secreted. Iota-conotoxins bind to voltage-gated sodium channels (Nav) and act as agonists by shifting the voltage-dependence of activation to more hyperpolarized levels. Produces general excitatory symptoms. The chain is Iota-conotoxin-like R11.16 from Conus radiatus (Rayed cone).